The following is an 800-amino-acid chain: Putative antiporter subunit mnhA2 (800 aa).

A run of 20 helical transmembrane segments spans residues M1–S21, I33–A53, G78–A98, L118–F138, F167–M187, G207–F227, T241–L261, Y273–L293, G300–G320, I331–I351, L387–S407, F424–F444, P472–V492, G527–I547, I595–L615, G627–I647, L651–M671, L676–S696, I712–T732, and L768–L788.

Belongs to the CPA3 antiporters (TC 2.A.63) subunit A family. In terms of assembly, may form a heterooligomeric complex that consists of seven subunits: mnhA2, mnhB2, mnhC2, mnhD2, mnhE2, mnhF2 and mnhG2.

It is found in the cell membrane. This Staphylococcus aureus (strain USA300) protein is Putative antiporter subunit mnhA2 (mnhA2).